A 619-amino-acid chain; its full sequence is Chaperone protein HscA homolog (619 aa).

It belongs to the heat shock protein 70 family.

Functionally, chaperone involved in the maturation of iron-sulfur cluster-containing proteins. Has a low intrinsic ATPase activity which is markedly stimulated by HscB. This chain is Chaperone protein HscA homolog, found in Pseudomonas aeruginosa (strain LESB58).